Reading from the N-terminus, the 427-residue chain is Putative acyl-CoA thioester hydrolase YbhC (427 aa).

A signal peptide spans 1-21 (MNTFSVSRLALALAFGVTLTA). Cysteine 22 carries the N-palmitoyl cysteine lipid modification. The S-diacylglycerol cysteine moiety is linked to residue cysteine 22. The interval 23-42 (SSTPPDQRPSDQTAPGTSSR) is disordered. An intrachain disulfide couples cysteine 185 to cysteine 197. Aspartate 285 acts as the Nucleophile in catalysis. Arginine 345 lines the substrate pocket.

The protein belongs to the pectinesterase family.

Its subcellular location is the cell outer membrane. In terms of biological role, putative thioesterase. Does not bind pectin, and has no pectinesterase activity. The sequence is that of Putative acyl-CoA thioester hydrolase YbhC (ybhC) from Escherichia coli (strain K12).